Here is a 308-residue protein sequence, read N- to C-terminus: HTH-type transcriptional regulator SsuR (308 aa).

Positions M1–L59 constitute an HTH lysR-type domain. Residues L19–K38 constitute a DNA-binding region (H-T-H motif).

It belongs to the LysR transcriptional regulatory family.

Functionally, transcriptional regulator that is essential for the utilization of a number of organic sulfur sources of either environmental or human origin. Required for aliphatic sulfonate utilization. Binds to DNA at target promoter regions. Targets include the ssuDBC operon, the tauABC operon, three tauD-type genes and atsA. This chain is HTH-type transcriptional regulator SsuR, found in Burkholderia cenocepacia (strain ATCC BAA-245 / DSM 16553 / LMG 16656 / NCTC 13227 / J2315 / CF5610) (Burkholderia cepacia (strain J2315)).